The sequence spans 390 residues: Queuine tRNA-ribosyltransferase (390 aa).

D92 (proton acceptor) is an active-site residue. Substrate is bound by residues 92–96 (DSGGF), D146, Q195, and G222. Residues 253-259 (GVGTPED) are RNA binding. The active-site Nucleophile is D272. Positions 277 to 281 (TRNAR) are RNA binding; important for wobble base 34 recognition. Zn(2+) contacts are provided by C310, C312, C315, and H354.

It belongs to the queuine tRNA-ribosyltransferase family. As to quaternary structure, homodimer. Within each dimer, one monomer is responsible for RNA recognition and catalysis, while the other monomer binds to the replacement base PreQ1. Zn(2+) is required as a cofactor.

The catalysed reaction is 7-aminomethyl-7-carbaguanine + guanosine(34) in tRNA = 7-aminomethyl-7-carbaguanosine(34) in tRNA + guanine. It functions in the pathway tRNA modification; tRNA-queuosine biosynthesis. In terms of biological role, catalyzes the base-exchange of a guanine (G) residue with the queuine precursor 7-aminomethyl-7-deazaguanine (PreQ1) at position 34 (anticodon wobble position) in tRNAs with GU(N) anticodons (tRNA-Asp, -Asn, -His and -Tyr). Catalysis occurs through a double-displacement mechanism. The nucleophile active site attacks the C1' of nucleotide 34 to detach the guanine base from the RNA, forming a covalent enzyme-RNA intermediate. The proton acceptor active site deprotonates the incoming PreQ1, allowing a nucleophilic attack on the C1' of the ribose to form the product. After dissociation, two additional enzymatic reactions on the tRNA convert PreQ1 to queuine (Q), resulting in the hypermodified nucleoside queuosine (7-(((4,5-cis-dihydroxy-2-cyclopenten-1-yl)amino)methyl)-7-deazaguanosine). The protein is Queuine tRNA-ribosyltransferase of Paracidovorax citrulli (strain AAC00-1) (Acidovorax citrulli).